The chain runs to 329 residues: Glucokinase (329 aa).

13–18 contacts ATP; it reads GDIGGT.

Belongs to the bacterial glucokinase family.

It is found in the cytoplasm. It carries out the reaction D-glucose + ATP = D-glucose 6-phosphate + ADP + H(+). The protein is Glucokinase of Caulobacter sp. (strain K31).